A 422-amino-acid chain; its full sequence is Beta-1,3-galactosyltransferase 2 (422 aa).

At 1–24 (MLQWRRRHCCFAKMTWNAKRSLFR) the chain is on the cytoplasmic side. The helical; Signal-anchor for type II membrane protein transmembrane segment at 25–45 (THLIGVLSLVFLFAMFLFFNH) threads the bilayer. The Lumenal segment spans residues 46-422 (HDWLPGRAGF…AGRYRHRKLH (377 aa)). N-linked (GlcNAc...) asparagine glycans are attached at residues Asn75, Asn100, Asn119, Asn176, and Asn226. A disordered region spans residues 90–110 (TLRPQTATNSNNTDLSPQGVT).

It belongs to the glycosyltransferase 31 family. Requires Mn(2+) as cofactor.

Its subcellular location is the golgi apparatus membrane. It carries out the reaction an N-acetyl-beta-D-glucosaminyl derivative + UDP-alpha-D-galactose = a beta-D-galactosyl-(1-&gt;3)-N-acetyl-beta-D-glucosaminyl derivative + UDP + H(+). The enzyme catalyses a beta-D-GlcNAc-(1-&gt;3)-beta-D-Gal-(1-&gt;4)-beta-D-Glc-(1&lt;-&gt;1)-Cer(d18:1(4E)) + UDP-alpha-D-galactose = a beta-D-Gal-(1-&gt;3)-beta-D-GlcNAc-(1-&gt;3)-beta-D-Gal-(1-&gt;4)-beta-D-Glc-(1&lt;-&gt;1')-Cer(d18:1(4E)) + UDP + H(+). It catalyses the reaction a neolactoside IV(3)-beta-GlcNAc-nLc4Cer(d18:1(4E)) + UDP-alpha-D-galactose = a neolactoside IV(3)-beta-[Gal-beta-(1-&gt;3)-GlcNAc]-nLc4Cer(d18:1(4E)) + UDP + H(+). Its pathway is protein modification; protein glycosylation. In terms of biological role, beta-1,3-galactosyltransferase that transfers galactose from UDP-galactose to substrates with a terminal beta-N-acetylglucosamine (beta-GlcNAc) residue. Can also utilize substrates with a terminal galactose residue, albeit with lower efficiency. Involved in the biosynthesis of the carbohydrate moieties of glycolipids and glycoproteins. Inactive towards substrates with terminal alpha-N-acetylglucosamine (alpha-GlcNAc) or alpha-N-acetylgalactosamine (alpha-GalNAc) residues. The polypeptide is Beta-1,3-galactosyltransferase 2 (B3GALT2) (Pongo abelii (Sumatran orangutan)).